A 512-amino-acid polypeptide reads, in one-letter code: Tyrosine decarboxylase (512 aa).

P100, H205, and H320 together coordinate L-tyrosine. Residue K321 is modified to N6-(pyridoxal phosphate)lysine. Residue Y350 participates in L-tyrosine binding.

The protein belongs to the group II decarboxylase family. As to quaternary structure, homodimer. Requires pyridoxal 5'-phosphate as cofactor. In terms of tissue distribution, mainly expressed in roots, stems and capsule walls.

The enzyme catalyses L-tyrosine + H(+) = tyramine + CO2. Functionally, tyrosine decarboxylase that converts tyrosine into tyramine, a precursor of isoquinoline alkaloids and various amides. This chain is Tyrosine decarboxylase, found in Papaver somniferum (Opium poppy).